Reading from the N-terminus, the 299-residue chain is Coenzyme PQQ synthesis protein B (299 aa).

It belongs to the PqqB family.

It functions in the pathway cofactor biosynthesis; pyrroloquinoline quinone biosynthesis. In terms of biological role, may be involved in the transport of PQQ or its precursor to the periplasm. The sequence is that of Coenzyme PQQ synthesis protein B from Methylobacterium sp. (strain 4-46).